The sequence spans 61 residues: Photosystem II reaction center X protein (61 aa).

Residues 26-46 traverse the membrane as a helical segment; that stretch reads IGSFIAAALLIVIPATAFLIF.

It belongs to the PsbX family. Type 2 subfamily. As to quaternary structure, PSII consists of a core antenna complex that captures photons, and an electron transfer chain that converts photonic excitation into a charge separation. PSII forms dimeric complexes.

It is found in the cellular thylakoid membrane. Its function is as follows. Involved in the binding and/or turnover of quinones at the Q(B) site of Photosystem II. The chain is Photosystem II reaction center X protein from Prochlorococcus marinus (strain MIT 9312).